The chain runs to 513 residues: MQLNPSEISELIKSRIQGLEASADVRNQGTVISVTDGIVRIHGLSDVMQGEMLEFPGNTFGLALNLERDSVGAVILGEYEHISEGDIVKTTGRILEVPVGPELVGRVLDALGNPIDGKGPVNAKLTDAIEKIAPGVIWRKSVSQPVQTGLKSIDSMVPIGRGQRELIIGDRQCGKTAVAIDTIINQKGKDLICIYVAIGQKASSIMNVVRKLEETGALEYTIVVAASASESAAMQYLAPYAGCTMGEYFRDRGQDALIIYDDLTKQAWAYRQISLLLRRPPGREAYPGDVFYLHSRLLERAARVSEEYVEKFTNGEVKGKSGSLTALPVIETQAGDVTAFVPTNVISITDGQIFLETDLFNAGIRPAINAGVSVSRVGGAAQTKVVKKLSGGIRTDLAQYRELAAFAQFASDLDEATRKQLERGRRVTELLKQPQYQPLQVWELAVSLFSANNGYLDDLDVKDVLPFEKGLREYLKTSHADLIKRIEDTKDLSKDDESALHAALKDFKKSGAY.

Residue glycine 169–threonine 176 participates in ATP binding.

The protein belongs to the ATPase alpha/beta chains family. As to quaternary structure, F-type ATPases have 2 components, CF(1) - the catalytic core - and CF(0) - the membrane proton channel. CF(1) has five subunits: alpha(3), beta(3), gamma(1), delta(1), epsilon(1). CF(0) has three main subunits: a(1), b(2) and c(9-12). The alpha and beta chains form an alternating ring which encloses part of the gamma chain. CF(1) is attached to CF(0) by a central stalk formed by the gamma and epsilon chains, while a peripheral stalk is formed by the delta and b chains.

The protein localises to the cell inner membrane. It catalyses the reaction ATP + H2O + 4 H(+)(in) = ADP + phosphate + 5 H(+)(out). In terms of biological role, produces ATP from ADP in the presence of a proton gradient across the membrane. The alpha chain is a regulatory subunit. This Burkholderia mallei (strain NCTC 10229) protein is ATP synthase subunit alpha.